The sequence spans 97 residues: MNQERIYKVLLGPHVSEKASLAAERGQVVFRVAPDATKPEIKKAVEQLFNVTVEGVQVLNRKGKLKRTIRGFGKRNDIRKAYVKLAEGQDIDFLDVE.

The protein belongs to the universal ribosomal protein uL23 family. As to quaternary structure, part of the 50S ribosomal subunit. Contacts protein L29, and trigger factor when it is bound to the ribosome.

In terms of biological role, one of the early assembly proteins it binds 23S rRNA. One of the proteins that surrounds the polypeptide exit tunnel on the outside of the ribosome. Forms the main docking site for trigger factor binding to the ribosome. This chain is Large ribosomal subunit protein uL23, found in Marinobacter nauticus (strain ATCC 700491 / DSM 11845 / VT8) (Marinobacter aquaeolei).